A 327-amino-acid polypeptide reads, in one-letter code: Aspartate--ammonia ligase (327 aa).

Belongs to the class-II aminoacyl-tRNA synthetase family. AsnA subfamily.

Its subcellular location is the cytoplasm. The enzyme catalyses L-aspartate + NH4(+) + ATP = L-asparagine + AMP + diphosphate + H(+). It functions in the pathway amino-acid biosynthesis; L-asparagine biosynthesis; L-asparagine from L-aspartate (ammonia route): step 1/1. The protein is Aspartate--ammonia ligase of Bacillus cereus (strain AH187).